Reading from the N-terminus, the 1481-residue chain is Cystic fibrosis transmembrane conductance regulator (1481 aa).

The Cytoplasmic segment spans residues 1–77 (MQRSPLEKAS…KLINALRRCF (77 aa)). A helical membrane pass occupies residues 78 to 98 (FWRFMFYGIILYLGEVTKAVQ). Positions 81-365 (FMFYGIILYL…WAVQTWYDSL (285 aa)) constitute an ABC transmembrane type-1 1 domain. Residues 99–122 (PLLLGRIIASYDPDNKVERSIAIY) are Extracellular-facing. The chain crosses the membrane as a helical span at residues 123 to 146 (LGIGLCLLFIVRTLLLHPAIFGLH). Topologically, residues 147–195 (HIGMQMRIAMFSLIYKKTLKLSSRVLDKISIGQLVSLLSNNLNKFDEGL) are cytoplasmic. The helical transmembrane segment at 196–216 (ALAHFVWIAPLQVTLLMGLLW) threads the bilayer. Residues 217–222 (DLLQAF) are Extracellular-facing. Residues 223–243 (TFCGLAFLVVLALLQAGLGKM) form a helical membrane-spanning segment. Residues 244-298 (MMKYRDQRAGKINERLVITSEMIENIQSVKAYCWEEAMEKIIENLRQTELKLTRK) are Cytoplasmic-facing. Residues 299 to 319 (AAYVRYLNSSAFFFSGFFVVF) traverse the membrane as a helical segment. Over 320–339 (LSVLPYALLKGIILRKIFTT) the chain is Extracellular. The helical transmembrane segment at 340 to 358 (ISFCIVLRMAVTRQFPWAV) threads the bilayer. Residues 359 to 858 (QTWYDSLGAI…YLRYITVHKS (500 aa)) lie on the Cytoplasmic side of the membrane. ATP contacts are provided by residues tryptophan 401, 457–464 (GSTGAGKT), and glutamine 492. One can recognise an ABC transporter 1 domain in the interval 421–645 (ISNCDTSLFF…RPDFSSKLMG (225 aa)). Cysteine 523 is lipidated: S-palmitoyl cysteine. Serine 548 and serine 659 each carry phosphoserine. The disordered R region stretch occupies residues 653–831 (TAERRNSIIT…EEINEEDLRD (179 aa)). Serine 669 carries the post-translational modification Phosphoserine; by PKA. Position 685 is a phosphoserine (serine 685). Lysine 687 is covalently cross-linked (Glycyl lysine isopeptide (Lys-Gly) (interchain with G-Cter in ubiquitin)). A phosphoserine mark is found at serine 699 and serine 711. At threonine 716 the chain carries Phosphothreonine. Serine 736, serine 767, serine 790, serine 795, and serine 813 each carry phosphoserine. A helical membrane pass occupies residues 859–879 (LMFVLIWCLVVFLVEVAASLV). An ABC transmembrane type-1 2 domain is found at 859–1155 (LMFVLIWCLV…AVNSSIDVDS (297 aa)). Residues 880–918 (VLCLFPKILLQDKGNSTKNASNSYAVIITSTSSYYIFYI) are Extracellular-facing. N-linked (GlcNAc...) asparagine glycosylation is found at asparagine 894 and asparagine 898. A discontinuously helical transmembrane segment spans residues 919–939 (YVGVADTLLALGLFRGLPLVH). Over 940–990 (TLITVSKTLHHKMLQSVLQAPMSTLNTLKTGGILNRFSKDIAVLDDLLPLT) the chain is Cytoplasmic. Residues 991–1011 (IFDFIQLLLIVIGAVVVVSVL) traverse the membrane as a helical segment. Residues 1012–1013 (QP) are Extracellular-facing. Residues 1014–1034 (YIFLATVPVIAAFILLRGYFL) form a helical membrane-spanning segment. Over 1035-1095 (HTSQQLKQLE…TANWFLYLST (61 aa)) the chain is Cytoplasmic. Residues 1096 to 1116 (LRWFQMRIEMIFVIFFIAVTF) form a helical membrane-spanning segment. Residues 1117-1130 (ISILTTGEGEGRVG) are Extracellular-facing. A helical membrane pass occupies residues 1131-1151 (IILTLAMNIMGTLQWAVNSSI). The Cytoplasmic portion of the chain corresponds to 1152-1481 (DVDSLMRSVS…TEEEVQETKL (330 aa)). Residues 1211–1444 (MTVKDLTAKY…KSLFRQAISP (234 aa)) enclose the ABC transporter 2 domain. Residues tyrosine 1220 and 1245–1252 (GRTGSGKS) each bind ATP. The tract at residues 1387–1481 (RTLKQAFADC…TEEEVQETKL (95 aa)) is interaction with GORASP2. Cysteine 1396 carries the S-palmitoyl cysteine lipid modification. Serine 1457 bears the Phosphoserine mark. The short motif at 1479 to 1481 (TKL) is the PDZ-binding element.

This sequence belongs to the ABC transporter superfamily. ABCC family. CFTR transporter (TC 3.A.1.202) subfamily. In terms of assembly, monomer; does not require oligomerization for channel activity. May form oligomers in the membrane. Interacts with SLC26A3, SLC26A6 and NHERF1. Interacts with SHANK2. Interacts with MYO6. Interacts (via C-terminus) with GOPC (via PDZ domain); this promotes CFTR internalization and thereby decreases channel activity. Interacts with SLC4A7 through NHERF1. Found in a complex with MYO5B and RAB11A. Interacts with ANO1. Interacts with SLC26A8. Interacts with AHCYL1; the interaction increases CFTR activity. Interacts with CSE1L. The core-glycosylated form interacts with GORASP2 (via PDZ GRASP-type 1 domain) in respone to ER stress. Interacts with MARCHF2; the interaction leads to CFTR ubiqtuitination and degradation. Interacts with ADGRG2. N-glycosylated. In terms of processing, phosphorylated; cAMP treatment promotes phosphorylation and activates the channel. Dephosphorylation decreases the ATPase activity (in vitro). Phosphorylation at PKA sites activates the channel. Phosphorylation at PKC sites enhances the response to phosphorylation by PKA. Phosphorylated by AMPK; this inhibits channel activity. Post-translationally, ubiquitinated, leading to its degradation in the lysosome. Deubiquitination by USP10 in early endosomes enhances its endocytic recycling to the cell membrane. Ubiquitinated by RNF185 during ER stress. Ubiquitinated by MARCHF2.

It localises to the apical cell membrane. Its subcellular location is the early endosome membrane. The protein localises to the cell membrane. It is found in the recycling endosome membrane. The protein resides in the endoplasmic reticulum membrane. It localises to the nucleus. It catalyses the reaction ATP + H2O + closed Cl(-) channel = ADP + phosphate + open Cl(-) channel.. The enzyme catalyses chloride(in) = chloride(out). It carries out the reaction hydrogencarbonate(in) = hydrogencarbonate(out). The catalysed reaction is ATP + H2O = ADP + phosphate + H(+). In terms of biological role, epithelial ion channel that plays an important role in the regulation of epithelial ion and water transport and fluid homeostasis. Mediates the transport of chloride ions across the cell membrane. Possesses an intrinsic ATPase activity and utilizes ATP to gate its channel; the passive flow of anions through the channel is gated by cycles of ATP binding and hydrolysis by the ATP-binding domains. The ion channel is also permeable to HCO(3)(-); selectivity depends on the extracellular chloride concentration. Exerts its function also by modulating the activity of other ion channels and transporters. Contributes to the regulation of the pH and the ion content of the epithelial fluid layer. Modulates the activity of the epithelial sodium channel (ENaC) complex, in part by regulating the cell surface expression of the ENaC complex. May regulate bicarbonate secretion and salvage in epithelial cells by regulating the transporter SLC4A7. Can inhibit the chloride channel activity of ANO1. Plays a role in the chloride and bicarbonate homeostasis during sperm epididymal maturation and capacitation. The sequence is that of Cystic fibrosis transmembrane conductance regulator from Ovis aries (Sheep).